The chain runs to 313 residues: T-box protein 37 (313 aa).

The segment at residues 19 to 195 (IWEKFYPKTE…HNKFASGFRS (177 aa)) is a DNA-binding region (T-box). The interval 193-228 (FRSNGKRRLSSESENSENSPPKRSASAISSLTPPAI) is disordered.

It localises to the nucleus. In terms of biological role, transcription factor. Required for mesodermal induction, acting redundantly with transcription factor tbx-38. Together with tbx-38, acts by inducing cell fates in the AB lineage, thereby playing a role in development of the anterior pharynx. This is T-box protein 37 (tbx-37) from Caenorhabditis elegans.